A 133-amino-acid chain; its full sequence is Thioredoxin H2 (133 aa).

A disordered region spans residues Met1–Ser22. Positions Ser6–Ala133 constitute a Thioredoxin domain. Catalysis depends on nucleophile residues Cys59 and Cys62. Cys59 and Cys62 are disulfide-bonded.

It belongs to the thioredoxin family. Plant H-type subfamily. Interacts with MDH1.

The protein localises to the cytoplasm. It is found in the mitochondrion. Functionally, thiol-disulfide oxidoreductase probably involved in the redox regulation of a number of cytosolic enzymes. Possesses insulin disulfide bonds reducing activity. The chain is Thioredoxin H2 (TRX2) from Arabidopsis thaliana (Mouse-ear cress).